A 456-amino-acid chain; its full sequence is Cytochrome c biogenesis protein CcsB (456 aa).

Helical transmembrane passes span 29–49 (LRLAILLLLAIAIASATGTVI), 88–108 (AGWFLGLLILFGASLTACTFR), and 174–194 (VGPILVHAGMLVVLGGAIWGS).

The protein belongs to the Ccs1/CcsB family. May interact with CcsA.

It is found in the cellular thylakoid membrane. Its function is as follows. Required during biogenesis of c-type cytochromes (cytochrome c6 and cytochrome f) at the step of heme attachment. In Synechococcus sp. (strain ATCC 27144 / PCC 6301 / SAUG 1402/1) (Anacystis nidulans), this protein is Cytochrome c biogenesis protein CcsB.